The chain runs to 87 residues: Type 3 secretion system needle filament protein (87 aa).

The protein belongs to the SctF family. The core secretion machinery of the T3SS is composed of approximately 20 different proteins, including cytoplasmic components, a base, an export apparatus and a needle. This subunit polymerizes and forms the helical needle filament. In Y.enterocolitica E40, the needles are composed of 139 (plus-minus 19) YscF/SctF subunits.

Its subcellular location is the secreted. The protein resides in the cell surface. With respect to regulation, the secretion and/or polymerization may be controlled by the type III secretion system regulator YopR. Functionally, component of the type III secretion system (T3SS), also called injectisome, which is used to inject bacterial effector proteins into eukaryotic host cells. YscF/SctF forms the external needle filament that protrudes from the bacterial surface. The needle is not sufficient by itself for the formation of a pore allowing translocation of the Yop effectors across the host cell membrane. The protein is Type 3 secretion system needle filament protein of Yersinia enterocolitica.